A 525-amino-acid polypeptide reads, in one-letter code: Ubiquitin carboxyl-terminal hydrolase 22 (525 aa).

The UBP-type zinc finger occupies 21–138 (PGCSHLGSFK…KEEQRKAWKM (118 aa)). Residues Cys23, His25, Cys63, Cys66, Cys76, Cys79, Cys84, His89, His93, His99, Cys112, and Cys115 each contribute to the Zn(2+) site. The residue at position 129 (Lys129) is an N6-acetyllysine. Residue Thr147 is modified to Phosphothreonine. Residues 176 to 520 (RGLINLGNTC…EGYLLFYHKQ (345 aa)) form the USP domain. Cys185 (nucleophile) is an active-site residue. A Phosphoserine modification is found at Ser237. His479 acts as the Proton acceptor in catalysis.

The protein belongs to the peptidase C19 family. UBP8 subfamily. In terms of assembly, component of some SAGA transcription coactivator-HAT complexes, at least composed of ATXN7, ATXN7L3, ENY2, GCN5L2, SUPT3H, TAF10, TRRAP and USP22. Within the SAGA complex, ATXN7L3, ENY2 and USP22 form a subcomplex required for histone deubiquitination. Interacts directly with ATXN7L3; leading to its recruitment to the SAGA complex. Interacts with ATXN7L3 and weakly with ATXN7L3B. Interacts with MED1. Post-translationally, phosphorylated in G2/M phase, but not in G1 phase by CDK1. Ubiquitinated and subsequently degraded in a CDC20-dependent manner. Highly expressed in brain and weakly in other organs.

The protein localises to the nucleus. It is found in the cytoplasm. It carries out the reaction Thiol-dependent hydrolysis of ester, thioester, amide, peptide and isopeptide bonds formed by the C-terminal Gly of ubiquitin (a 76-residue protein attached to proteins as an intracellular targeting signal).. Functionally, deubiquitinase that plays a role in several cellular processes including transcriptional regulation, cell cycle progression or innate immunity. As part of the transcription regulatory histone acetylation (HAT) complex SAGA, catalyzes the deubiquitination of both histones H2A and H2B, thereby acting as a transcriptional coactivator. Recruited to specific gene promoters by activators such as MYC, where it is required for transcription. Facilitates cell-cycle progression by stabilizing CCNB1 and antagonizing its proteasome-mediated degradation in a cell cycle-specific manner. Modulates cell cycle progression and apoptosis also by antagonizing TP53 transcriptional activation through deacetylase SIRT1 stabilization. Plays multiple roles in immunity and inflammation. Participates in antiviral response by deubiquitinating the importin KPNA2, leading to IRF3 nuclear translocation and subsequent type I interferon production. Acts as a central regulator of type III IFN signaling by negatively regulating STING1 activation and ubiquitination. Inhibits NLRP3 inflammasome activation by promoting NLRP3 degradation through ATG5-dependent autophagy. Deubiquitinates CD274 to induce its stabilization and thereby participates in maintenance of immune tolerance to self. Controls necroptotic cell death by regulating RIPK3 phosphorylation and ubiquitination. During bacterial infection, promotes pro-inflammatory response by targeting TRAF6 and removing its 'Lys-48'-linked polyubiquitination. The protein is Ubiquitin carboxyl-terminal hydrolase 22 (Usp22) of Mus musculus (Mouse).